Reading from the N-terminus, the 356-residue chain is UDP-N-acetylglucosamine--N-acetylmuramyl-(pentapeptide) pyrophosphoryl-undecaprenol N-acetylglucosamine transferase (356 aa).

Residues 15–17 (TGG), N127, R163, S191, I244, 263–268 (ALTVSE), and Q288 contribute to the UDP-N-acetyl-alpha-D-glucosamine site.

This sequence belongs to the glycosyltransferase 28 family. MurG subfamily.

It localises to the cell inner membrane. The enzyme catalyses di-trans,octa-cis-undecaprenyl diphospho-N-acetyl-alpha-D-muramoyl-L-alanyl-D-glutamyl-meso-2,6-diaminopimeloyl-D-alanyl-D-alanine + UDP-N-acetyl-alpha-D-glucosamine = di-trans,octa-cis-undecaprenyl diphospho-[N-acetyl-alpha-D-glucosaminyl-(1-&gt;4)]-N-acetyl-alpha-D-muramoyl-L-alanyl-D-glutamyl-meso-2,6-diaminopimeloyl-D-alanyl-D-alanine + UDP + H(+). Its pathway is cell wall biogenesis; peptidoglycan biosynthesis. Its function is as follows. Cell wall formation. Catalyzes the transfer of a GlcNAc subunit on undecaprenyl-pyrophosphoryl-MurNAc-pentapeptide (lipid intermediate I) to form undecaprenyl-pyrophosphoryl-MurNAc-(pentapeptide)GlcNAc (lipid intermediate II). The protein is UDP-N-acetylglucosamine--N-acetylmuramyl-(pentapeptide) pyrophosphoryl-undecaprenol N-acetylglucosamine transferase of Yersinia pseudotuberculosis serotype O:1b (strain IP 31758).